Here is a 752-residue protein sequence, read N- to C-terminus: Complement C2 (752 aa).

The N-terminal stretch at 1–20 is a signal peptide; that stretch reads MGPLMVLFCLLFVYTGLADS. 3 Sushi domains span residues 22 to 86, 87 to 146, and 149 to 206; these read PSCP…VCKP, VRCP…VCDN, and GHCP…ICRQ. 6 disulfide bridges follow: C24–C64, C51–C84, C89–C131, C117–C144, C151–C191, and C177–C204. N29 carries N-linked (GlcNAc...) asparagine glycosylation. An N-linked (GlcNAc...) asparagine glycan is attached at N112. The VWFA domain occupies 254 to 452; the sequence is NLYLLLDCSQ…KALHQVFEHM (199 aa). The MIDAS-like motif motif lies at 260 to 264; that stretch reads DCSQS. Residues S262 and S264 each coordinate Mg(2+). N-linked (GlcNAc...) asparagine glycosylation is found at N290 and N333. T337 contributes to the Mg(2+) binding site. Cystine bridges form between C463/C581, C492/C508, and C584/C600. Positions 464-744 constitute a Peptidase S1 domain; it reads GVGNMSANAS…MQPWLRQHLG (281 aa). N467 and N471 each carry an N-linked (GlcNAc...) asparagine glycan. Catalysis depends on charge relay system residues H507 and D561. N-linked (GlcNAc...) asparagine glycosylation is found at N621 and N651. Intrachain disulfides connect C638–C665 and C675–C705. The active-site Charge relay system is the S679.

The protein belongs to the peptidase S1 family. In terms of assembly, serine protease component of the C3 convertase, also named C4bC2b, composed of the serine protease complement C2b and complement C4b. Serine protease component of the C5 convertase, also named C4bC2bC3b, composed of the serine protease complement C2b, complement C3b, as well as complement C4b. Mg(2+) serves as cofactor. The cofactor is Mn(2+). Cleaved and activated by different proteases depending on the complement pathway to generate complement C2a and serine protease complement C2b chains. Cleaved and activated by C1S following activation by the classical complement system. Cleaved and activated by MASP2 following activation by the lectin complement system. Cleaved and activated by GZMK following activation by the GZMK complement system.

The protein resides in the secreted. Its subcellular location is the cell surface. It carries out the reaction Selective cleavage of Arg-|-Ser bond in complement component C3 alpha-chain to form C3a and C3b, and Arg-|-Xaa bond in complement component C5 alpha-chain to form C5a and C5b.. Precursor of the catalytic component of the C3 and C5 convertase complexes, which are part of the complement pathway, a cascade of proteins that leads to phagocytosis and breakdown of pathogens and signaling that strengthens the adaptive immune system. Component C2 is part of the classical, lectin and GZMK complement systems. Its function is as follows. Catalytic component of the complement C3 and C5 convertase complexes. Following complement activation, recruited to the surface of pathogens by complement C4b opsonin to form the C3 convertase, or C3b and C4b opsonins to form the C5 convertase. As part of the C3 convertase, cleaves and activate C3 into C3a anaphylatoxin and C3b opsonin, the next components of the complement pathways. As part of the C5 convertase, cleaves and activate C5 into C5a anaphylatoxin and C5b component of the membrane attack complex. This is Complement C2 from Gorilla gorilla gorilla (Western lowland gorilla).